We begin with the raw amino-acid sequence, 474 residues long: Bifunctional protein HldE (474 aa).

The ribokinase stretch occupies residues 1–317; it reads MKLSMPRFDR…RRAVQREQGS (317 aa). 194-197 is an ATP binding site; that stretch reads NLAE. Residue aspartate 263 is part of the active site. A cytidylyltransferase region spans residues 343-474; the sequence is FTNGCFDILH…GIVEKIRRQP (132 aa).

The protein in the N-terminal section; belongs to the carbohydrate kinase PfkB family. This sequence in the C-terminal section; belongs to the cytidylyltransferase family. In terms of assembly, homodimer.

It carries out the reaction D-glycero-beta-D-manno-heptose 7-phosphate + ATP = D-glycero-beta-D-manno-heptose 1,7-bisphosphate + ADP + H(+). The enzyme catalyses D-glycero-beta-D-manno-heptose 1-phosphate + ATP + H(+) = ADP-D-glycero-beta-D-manno-heptose + diphosphate. Its pathway is nucleotide-sugar biosynthesis; ADP-L-glycero-beta-D-manno-heptose biosynthesis; ADP-L-glycero-beta-D-manno-heptose from D-glycero-beta-D-manno-heptose 7-phosphate: step 1/4. The protein operates within nucleotide-sugar biosynthesis; ADP-L-glycero-beta-D-manno-heptose biosynthesis; ADP-L-glycero-beta-D-manno-heptose from D-glycero-beta-D-manno-heptose 7-phosphate: step 3/4. Catalyzes the phosphorylation of D-glycero-D-manno-heptose 7-phosphate at the C-1 position to selectively form D-glycero-beta-D-manno-heptose-1,7-bisphosphate. In terms of biological role, catalyzes the ADP transfer from ATP to D-glycero-beta-D-manno-heptose 1-phosphate, yielding ADP-D-glycero-beta-D-manno-heptose. The protein is Bifunctional protein HldE of Azotobacter vinelandii (strain DJ / ATCC BAA-1303).